The primary structure comprises 88 residues: EMBRYO SURROUNDING FACTOR 1-like protein 11 (88 aa).

An N-terminal signal peptide occupies residues 1–23; that stretch reads MISSSHFAIFCIILVSLFALQQY. Intrachain disulfides connect Cys-44–Cys-59, Cys-49–Cys-78, Cys-57–Cys-74, and Cys-60–Cys-67.

Belongs to the MEG family. In terms of tissue distribution, expressed in stems.

The protein is EMBRYO SURROUNDING FACTOR 1-like protein 11 (ESFL11) of Arabidopsis thaliana (Mouse-ear cress).